We begin with the raw amino-acid sequence, 24 residues long: Coenzyme PQQ synthesis protein A (24 aa).

Residues 16–20 (EVTMY) constitute a cross-link (pyrroloquinoline quinone (Glu-Tyr)).

The protein belongs to the PqqA family.

It participates in cofactor biosynthesis; pyrroloquinoline quinone biosynthesis. Required for coenzyme pyrroloquinoline quinone (PQQ) biosynthesis. PQQ is probably formed by cross-linking a specific glutamate to a specific tyrosine residue and excising these residues from the peptide. In Pseudomonas syringae pv. syringae (strain B728a), this protein is Coenzyme PQQ synthesis protein A.